The following is a 309-amino-acid chain: MPIRVPDELPAVNFLREENVFVMTTSRASGQEIRPLKVLILNLMPKKIETENQFLRLLSNSPLQVDIQLLRIDSRESRNTPAEHLNNFYCNFEDIQEQNFDGLIVTGAPLGLVEFNDVAYWPQIKQVLEWSKDHVTSTLFVCWAVQAALNILYGIPKQTRTDKLSGVYEHHILHPHALLTRGFDDSFLAPHSRYADFPAALIRDYTDLEILAETEEGDAYLFASKDKRIAFVTGHPEYDAQTLAQEYFRDVEAGLDPEVPYNYFPHNDPQNKPRASWRSHGNLLFTNWLNYYVYQITPYDLRHMNPTLD.

Cys-142 serves as the catalytic Acyl-thioester intermediate. Residues Lys-163 and Ser-192 each contribute to the substrate site. His-235 functions as the Proton acceptor in the catalytic mechanism. The active site involves Glu-237. Arg-249 contributes to the substrate binding site.

This sequence belongs to the MetA family. Homodimer.

It localises to the cytoplasm. It carries out the reaction L-homoserine + succinyl-CoA = O-succinyl-L-homoserine + CoA. Its pathway is amino-acid biosynthesis; L-methionine biosynthesis via de novo pathway; O-succinyl-L-homoserine from L-homoserine: step 1/1. Its function is as follows. Transfers a succinyl group from succinyl-CoA to L-homoserine, forming succinyl-L-homoserine. This chain is Homoserine O-succinyltransferase, found in Escherichia coli O157:H7.